The sequence spans 601 residues: Elongation factor 4 (601 aa).

In terms of domain architecture, tr-type G spans 5-187; the sequence is ENIRNFCIIA…AIVHHLPAPK (183 aa). GTP-binding positions include 17-22 and 134-137; these read DHGKST and NKID.

This sequence belongs to the TRAFAC class translation factor GTPase superfamily. Classic translation factor GTPase family. LepA subfamily.

Its subcellular location is the cell inner membrane. It carries out the reaction GTP + H2O = GDP + phosphate + H(+). Functionally, required for accurate and efficient protein synthesis under certain stress conditions. May act as a fidelity factor of the translation reaction, by catalyzing a one-codon backward translocation of tRNAs on improperly translocated ribosomes. Back-translocation proceeds from a post-translocation (POST) complex to a pre-translocation (PRE) complex, thus giving elongation factor G a second chance to translocate the tRNAs correctly. Binds to ribosomes in a GTP-dependent manner. The chain is Elongation factor 4 from Desulfovibrio desulfuricans (strain ATCC 27774 / DSM 6949 / MB).